The primary structure comprises 205 residues: MQQKLETGIRQLGLDLPAEVTEKLLAYLALLAKWNKVHNLTAVRDPEDMVTLHLLDSLSVLPHVPSGSLLDVGSGAGLPGIVLAICRPDLQVTTIDAVQKKASFMRQAKAELQIDNLQVVAGRVEQFEPEAPFDTVISRAFSEIALFVKLTRHLMAEDGLWLAMKGQMPQEELGAVALKPAKIMSLIVPGLDAQRHLVFLPARQF.

S-adenosyl-L-methionine contacts are provided by residues Gly-73, Leu-78, Val-124–Glu-125, and Arg-139.

This sequence belongs to the methyltransferase superfamily. RNA methyltransferase RsmG family.

The protein localises to the cytoplasm. It carries out the reaction guanosine(527) in 16S rRNA + S-adenosyl-L-methionine = N(7)-methylguanosine(527) in 16S rRNA + S-adenosyl-L-homocysteine. Functionally, specifically methylates the N7 position of guanine in position 527 of 16S rRNA. In Methylobacillus flagellatus (strain ATCC 51484 / DSM 6875 / VKM B-1610 / KT), this protein is Ribosomal RNA small subunit methyltransferase G.